A 214-amino-acid chain; its full sequence is Octanoyltransferase (214 aa).

One can recognise a BPL/LPL catalytic domain in the interval 32-207 (EDTLDEIWLV…NLLALLNHPP (176 aa)). Substrate contacts are provided by residues 71 to 78 (RGGQVTYH), 138 to 140 (SLG), and 151 to 153 (GLA). The Acyl-thioester intermediate role is filled by Cys169.

It belongs to the LipB family.

The protein resides in the cytoplasm. It catalyses the reaction octanoyl-[ACP] + L-lysyl-[protein] = N(6)-octanoyl-L-lysyl-[protein] + holo-[ACP] + H(+). The protein operates within protein modification; protein lipoylation via endogenous pathway; protein N(6)-(lipoyl)lysine from octanoyl-[acyl-carrier-protein]: step 1/2. Catalyzes the transfer of endogenously produced octanoic acid from octanoyl-acyl-carrier-protein onto the lipoyl domains of lipoate-dependent enzymes. Lipoyl-ACP can also act as a substrate although octanoyl-ACP is likely to be the physiological substrate. The chain is Octanoyltransferase from Klebsiella pneumoniae (strain 342).